The primary structure comprises 633 residues: Glutamyl-tRNA(Gln) amidotransferase subunit E (633 aa).

The protein belongs to the GatB/GatE family. GatE subfamily. Heterodimer of GatD and GatE.

The enzyme catalyses L-glutamyl-tRNA(Gln) + L-glutamine + ATP + H2O = L-glutaminyl-tRNA(Gln) + L-glutamate + ADP + phosphate + H(+). Its function is as follows. Allows the formation of correctly charged Gln-tRNA(Gln) through the transamidation of misacylated Glu-tRNA(Gln) in organisms which lack glutaminyl-tRNA synthetase. The reaction takes place in the presence of glutamine and ATP through an activated gamma-phospho-Glu-tRNA(Gln). The GatDE system is specific for glutamate and does not act on aspartate. The chain is Glutamyl-tRNA(Gln) amidotransferase subunit E from Methanosarcina acetivorans (strain ATCC 35395 / DSM 2834 / JCM 12185 / C2A).